Reading from the N-terminus, the 366-residue chain is D-alanine--D-alanine ligase (366 aa).

The 204-residue stretch at 144 to 347 (KRLLKDAGLK…YRELIENLIE (204 aa)) folds into the ATP-grasp domain. 174-229 (KEELGLPMFIKPANQGSSVGVHKVENEEQFYSAIKDAFQFDHKLLVEEAIVGREIE) lines the ATP pocket. Positions 301, 314, and 316 each coordinate Mg(2+).

Belongs to the D-alanine--D-alanine ligase family. Mg(2+) serves as cofactor. Mn(2+) is required as a cofactor.

It localises to the cytoplasm. The enzyme catalyses 2 D-alanine + ATP = D-alanyl-D-alanine + ADP + phosphate + H(+). It functions in the pathway cell wall biogenesis; peptidoglycan biosynthesis. In terms of biological role, cell wall formation. The chain is D-alanine--D-alanine ligase from Oceanobacillus iheyensis (strain DSM 14371 / CIP 107618 / JCM 11309 / KCTC 3954 / HTE831).